A 125-amino-acid chain; its full sequence is Acyl carrier protein, mitochondrial (125 aa).

A mitochondrion-targeting transit peptide spans 1–36 (MFRSVCRISSRVAPSAYRTIMGRSVMSNTILAQRFY). Positions 43-122 (DQVSQRVIDV…ETVDYIASNP (80 aa)) constitute a Carrier domain. Ser-82 bears the O-(pantetheine 4'-phosphoryl)serine mark.

Belongs to the acyl carrier protein (ACP) family. In terms of assembly, complex I is composed of about 30 different subunits. Post-translationally, 4'-phosphopantetheine is transferred from CoA to a specific serine of apo-ACP by acpS. This modification is essential for activity because fatty acids are bound in thioester linkage to the sulfhydryl of the prosthetic group.

The protein localises to the mitochondrion. The protein operates within lipid metabolism; fatty acid biosynthesis. Its function is as follows. Carrier of the growing fatty acid chain in fatty acid biosynthesis. May be involved in the synthesis of very-long-chain fatty acids. Accessory and non-catalytic subunit of the mitochondrial membrane respiratory chain NADH dehydrogenase (Complex I), which functions in the transfer of electrons from NADH to the respiratory chain. The polypeptide is Acyl carrier protein, mitochondrial (ACP1) (Saccharomyces cerevisiae (strain ATCC 204508 / S288c) (Baker's yeast)).